The following is a 396-amino-acid chain: S-adenosylmethionine synthase (396 aa).

ATP is bound at residue H16. Residue D18 participates in Mg(2+) binding. E44 contacts K(+). E57 and Q100 together coordinate L-methionine. Positions 100–110 (QSVDIAQGVDR) are flexible loop. Residues 165-167 (DAK), D240, 246-247 (RK), A263, and K267 each bind ATP. D240 is an L-methionine binding site. Residue K271 participates in L-methionine binding.

This sequence belongs to the AdoMet synthase family. Homotetramer; dimer of dimers. It depends on Mg(2+) as a cofactor. K(+) serves as cofactor.

The protein resides in the cytoplasm. The enzyme catalyses L-methionine + ATP + H2O = S-adenosyl-L-methionine + phosphate + diphosphate. It functions in the pathway amino-acid biosynthesis; S-adenosyl-L-methionine biosynthesis; S-adenosyl-L-methionine from L-methionine: step 1/1. In terms of biological role, catalyzes the formation of S-adenosylmethionine (AdoMet) from methionine and ATP. The overall synthetic reaction is composed of two sequential steps, AdoMet formation and the subsequent tripolyphosphate hydrolysis which occurs prior to release of AdoMet from the enzyme. This chain is S-adenosylmethionine synthase, found in Pseudomonas syringae pv. tomato (strain ATCC BAA-871 / DC3000).